A 949-amino-acid chain; its full sequence is ATPase 1, plasma membrane-type (949 aa).

Serine 2 bears the N-acetylserine mark. Residues 2–61 are Cytoplasmic-facing; that stretch reads SGLEDIKNETVDLEKIPIEEVFQQLKCTREGLTTQEGEDRIVIFGPNKLEEKKESKILKF. The chain crosses the membrane as a helical span at residues 62–81; the sequence is LGFMWNPLSWVMEAAALMAI. Topologically, residues 82 to 93 are extracellular; the sequence is ALANGDNRPPDW. The chain crosses the membrane as a helical span at residues 94 to 114; it reads QDFVGIICLLVINSTISFIEE. Residues 115–243 are Cytoplasmic-facing; it reads NNAGNAAAAL…GHFQKVLTSI (129 aa). The helical transmembrane segment at 244–264 threads the bilayer; that stretch reads GNFCICSIAIGIAIEIVVMYP. At 265–273 the chain is on the extracellular side; that stretch reads IQHRKYRDG. The helical transmembrane segment at 274-291 threads the bilayer; it reads IDNLLVLLIGGIPIAMPT. Residues 292–643 lie on the Cytoplasmic side of the membrane; the sequence is VLSVTMAIGS…TSRAIFQRMK (352 aa). The active-site 4-aspartylphosphate intermediate is aspartate 329. Mg(2+) contacts are provided by aspartate 588 and aspartate 592. A helical membrane pass occupies residues 644–665; sequence NYTIYAVSITIRIVFGFMLIAL. The Extracellular portion of the chain corresponds to 666–670; that stretch reads IWEFD. The chain crosses the membrane as a helical span at residues 671-693; that stretch reads FSAFMVLIIAILNDGTIMTISKD. The Cytoplasmic portion of the chain corresponds to 694–709; it reads RVKPSPTPDSWKLKEI. A helical transmembrane segment spans residues 710 to 730; sequence FATGIVLGGYQAIMSVIFFWA. Residues 731–751 lie on the Extracellular side of the membrane; sequence AHKTDFFSDKFGVRSIRDNND. The chain crosses the membrane as a helical span at residues 752–772; it reads ELMGAVYLQVSIISQALIFVT. The Cytoplasmic portion of the chain corresponds to 773 to 784; sequence RSRSWSFVERPG. Residues 785 to 805 traverse the membrane as a helical segment; sequence ALLMIAFVIAQLVATLIAVYA. The Extracellular segment spans residues 806–813; that stretch reads DWTFAKVK. A helical membrane pass occupies residues 814-834; it reads GIGWGWAGVIWIYSIVTYFPQ. Residues 835 to 949 are Cytoplasmic-facing; it reads DILKFAIRYI…IDTAGHHYTV (115 aa). Residue threonine 881 is modified to Phosphothreonine. 2 positions are modified to phosphoserine: serine 899 and serine 931. Positions 947-949 are interaction with 14-3-3 proteins; sequence YTV. Phosphothreonine is present on threonine 948.

It belongs to the cation transport ATPase (P-type) (TC 3.A.3) family. Type IIIA subfamily. In terms of assembly, binds to 14-3-3 proteins. The binding is induced by phosphorylation of Thr-948. Binding to 14-3-3 proteins activates the H(+)-ATPase. Interacts with PPI1; this interaction promotes ATPase activity. Interacts with PSY1R. Part of a functional complex containing PSKR1, BAK1, CNGC17, and AHA. Interacts with CNGC17 and PSKR1. Triggered by SAUR9 via the phosphorylation of the C-terminal autoinhibitory domain. Interacts with AHA2. Binds to CBC1 and CBC2. Phosphorylated, probably by PHOT1 and PHOT2, at C-terminal Thr-948 in guard cells in response to blue light to induce stomatal opening. In terms of tissue distribution, expressed in guard cells, mesophyll cells, leaves and roots.

The protein localises to the cell membrane. The enzyme catalyses ATP + H2O + H(+)(in) = ADP + phosphate + 2 H(+)(out). With respect to regulation, phosphorylation on Thr residues is repressed by tyrphostin 9, sphingosine, GW5074 and BML-265. By contrast, the fungal phytotoxin fusicoccin (FC) promotes phosphorylation of Thr-948 independently to BHP, thus leading to large stomatal opening. Its function is as follows. The plasma membrane H(+) ATPase of plants and fungi generates a proton gradient that drives the active transport of nutrients by H(+)-symport. The resulting external acidification and/or internal alkinization may mediate growth responses. Forms a functional cation-translocating unit with CNGC17 that is activated by PSKR1/BAK1 and possibly other BAK1/RLK complexes. Promotes stomatal opening in response to blue light. The sequence is that of ATPase 1, plasma membrane-type from Arabidopsis thaliana (Mouse-ear cress).